The chain runs to 554 residues: GPI alpha-1,2-mannosyltransferase 3 (554 aa).

Asn26 is a glycosylation site (N-linked (GlcNAc...) asparagine). 9 helical membrane-spanning segments follow: residues 63–83 (LLLF…TSFV), 136–156 (VQLL…VADV), 192–212 (LTNT…PLEG), 224–244 (LVAL…PLLF), 255–275 (DLIL…SLMI), 315–335 (GFPV…YLAP), 340–360 (ILLV…HKEF), 362–382 (FIYP…THLK), and 387–407 (PALS…GLVH). Asn427 carries N-linked (GlcNAc...) asparagine glycosylation.

It belongs to the glycosyltransferase 22 family. PIGB subfamily.

It is found in the endoplasmic reticulum membrane. The protein operates within glycolipid biosynthesis; glycosylphosphatidylinositol-anchor biosynthesis. Alpha-1,2-mannosyltransferase that catalyzes the transfer of the third mannose, via an alpha-1,2 bond, from a dolichol-phosphate-mannose (Dol-P-Man) to an alpha-D-Man-(1-&gt;6)-2-PEtn-alpha-D-Man-(1-&gt;4)-alpha-D-GlcN-(1-&gt;6)-(1-radyl,2-acyl-sn-glycero-3-phospho)-2-acyl-inositol intermediate to generate an alpha-D-Man-(1-&gt;2)-alpha-D-Man-(1-&gt;6)-2-PEtn-alpha-D-Man-(1-&gt;4)-alpha-D-GlcN-(1-&gt;6)-(1-radyl,2-acyl-sn-glycero-3-phospho)-2-acyl-inositol (also termed H6) and participates in the nineth step of the glycosylphosphatidylinositol-anchor biosynthesis. May also add the third mannose to an alpha-D-Man-(1-&gt;6)-alpha-D-Man-(1-&gt;4)-alpha-D-GlcN-(1-&gt;6)-(1-radyl,2-acyl-sn-glycero-3-phospho)-2-acyl-inositol (also termed H3) intermediate generating an alpha-D-Man-(1-&gt;2)-alpha-D-Man-(1-&gt;6)-alpha-D-Man-(1-&gt;4)-alpha-D-GlcN-(1-&gt;6)-(1-radyl,2-acyl-sn-glycero-3-phospho)-2-acyl-inositol (also termed H4). This chain is GPI alpha-1,2-mannosyltransferase 3, found in Homo sapiens (Human).